The chain runs to 119 residues: Holo-[acyl-carrier-protein] synthase (119 aa).

2 residues coordinate Mg(2+): D8 and E58.

This sequence belongs to the P-Pant transferase superfamily. AcpS family. The cofactor is Mg(2+).

The protein localises to the cytoplasm. It catalyses the reaction apo-[ACP] + CoA = holo-[ACP] + adenosine 3',5'-bisphosphate + H(+). Its function is as follows. Transfers the 4'-phosphopantetheine moiety from coenzyme A to a Ser of acyl-carrier-protein. The protein is Holo-[acyl-carrier-protein] synthase of Halalkalibacterium halodurans (strain ATCC BAA-125 / DSM 18197 / FERM 7344 / JCM 9153 / C-125) (Bacillus halodurans).